A 538-amino-acid polypeptide reads, in one-letter code: Cytochrome P450 734A4 (538 aa).

Residues 5-27 (VAVAAAVLLLLHVAARVADAVWW) traverse the membrane as a helical segment. Cys-480 serves as a coordination point for heme.

This sequence belongs to the cytochrome P450 family. It depends on heme as a cofactor. In terms of tissue distribution, expressed in roots, shoot apex, leaf sheaths, leaf blades, internodes and panicles.

Its subcellular location is the membrane. In terms of biological role, cytochrome P450 involved in brassinosteroids (BRs) inactivation and regulation of BRs homeostasis. Is a multifunctional and multisubstrate enzyme that controls the endogenous bioactive BR content both by direct inactivation of castasterone (CS) and by decreasing the levels of BR precursors. Catalyzes the oxidation of carbon 22 hydroxylated BR intermediates to produce C26 oxidized metabolites. The chain is Cytochrome P450 734A4 (CYP734A4) from Oryza sativa subsp. japonica (Rice).